Reading from the N-terminus, the 321-residue chain is Glucokinase (321 aa).

A8–T13 provides a ligand contact to ATP.

The protein belongs to the bacterial glucokinase family.

It localises to the cytoplasm. The catalysed reaction is D-glucose + ATP = D-glucose 6-phosphate + ADP + H(+). This Photorhabdus laumondii subsp. laumondii (strain DSM 15139 / CIP 105565 / TT01) (Photorhabdus luminescens subsp. laumondii) protein is Glucokinase.